The chain runs to 184 residues: Lactoylglutathione lyase (184 aa).

Position 2 is an N-acetylalanine (A2). A disulfide bond links C19 and C20. One can recognise a VOC domain in the interval 31-177 (LLQQTMLRIK…DGYWIEILNP (147 aa)). Positions 34 and 38 each coordinate substrate. Q34 is a binding site for Zn(2+). E100 lines the Zn(2+) pocket. N104 is a substrate binding site. Position 107 is a phosphothreonine (T107). Substrate-binding residues include R123 and H127. H127 contacts Zn(2+). C139 is modified (S-glutathionyl cysteine). K148 is subject to N6-acetyllysine; alternate. K148 bears the N6-succinyllysine; alternate mark. 157–158 (KM) contacts substrate. Zn(2+) is bound at residue E173. E173 (proton donor/acceptor) is an active-site residue.

The protein belongs to the glyoxalase I family. In terms of assembly, homodimer. Zn(2+) serves as cofactor. Glutathionylation at Cys-139 inhibits enzyme activity. Post-translationally, phosphorylated at Thr-107 in the presence of CaMK2. However, this is a consensus site for phosphorylation by CK2 so phosphorylation may be mediated by CK2 rather than CaMK2. Phosphorylation is induced by TNF and suppresses the TNF-induced transcriptional activity of NF-kappa-B. In terms of processing, exists in a nitric oxide (NO)-modified form. The exact nature of the modification is unknown, but it suppresses the TNF-induced transcriptional activity of NF-kappa-B.

The catalysed reaction is (R)-S-lactoylglutathione = methylglyoxal + glutathione. The protein operates within secondary metabolite metabolism; methylglyoxal degradation; (R)-lactate from methylglyoxal: step 1/2. Functionally, catalyzes the conversion of hemimercaptal, formed from methylglyoxal and glutathione, to S-lactoylglutathione. Involved in the regulation of TNF-induced transcriptional activity of NF-kappa-B. Required for normal osteoclastogenesis. The sequence is that of Lactoylglutathione lyase (Glo1) from Rattus norvegicus (Rat).